A 429-amino-acid polypeptide reads, in one-letter code: Trigger factor (429 aa).

Positions 161–246 (GDRLSIDFKG…INEIASPKEL (86 aa)) constitute a PPIase FKBP-type domain.

The protein belongs to the FKBP-type PPIase family. Tig subfamily.

Its subcellular location is the cytoplasm. It carries out the reaction [protein]-peptidylproline (omega=180) = [protein]-peptidylproline (omega=0). Its function is as follows. Involved in protein export. Acts as a chaperone by maintaining the newly synthesized protein in an open conformation. Functions as a peptidyl-prolyl cis-trans isomerase. In Vesicomyosocius okutanii subsp. Calyptogena okutanii (strain HA), this protein is Trigger factor.